A 1134-amino-acid chain; its full sequence is Phytochrome 1 (1134 aa).

The GAF domain maps to 219-401 (DIGLLCDTVV…VFGLQLNMEA (183 aa)). Cys324 is a phytochromobilin binding site. Positions 616 to 687 (VANEMVRLIE…RLLYLALQGD (72 aa)) constitute a PAS 1 domain. Residues 690–746 (QNVELKLKTFGGQKDKEAVILVVNACASRDVSDNVVGVCFVGQDVTGQKVVMDKFTR) form the PAC domain. Residues 750-821 (DYKAIVQNPN…KGQDAVTKFM (72 aa)) form the PAS 2 domain. The Histidine kinase domain occupies 901-1121 (YIRQEIKNPL…LVSLELPLAQ (221 aa)).

Belongs to the phytochrome family. As to quaternary structure, homodimer. Post-translationally, contains one covalently linked phytochromobilin chromophore.

Regulatory photoreceptor which exists in two forms that are reversibly interconvertible by light: the Pr form that absorbs maximally in the red region of the spectrum and the Pfr form that absorbs maximally in the far-red region. Photoconversion of Pr to Pfr induces an array of morphogenic responses, whereas reconversion of Pfr to Pr cancels the induction of those responses. Pfr controls the expression of a number of nuclear genes including those encoding the small subunit of ribulose-bisphosphate carboxylase, chlorophyll A/B binding protein, protochlorophyllide reductase, rRNA, etc. It also controls the expression of its own gene(s) in a negative feedback fashion. The polypeptide is Phytochrome 1 (PHY1) (Selaginella martensii (Martens's spike moss)).